The following is a 609-amino-acid chain: Large ribosomal subunit assembly factor BipA (609 aa).

A tr-type G domain is found at 3-198 (QNIRNIAIIA…AIIKYAPAPN (196 aa)). GTP-binding positions include 15–20 (DHGKTT) and 128–131 (NKID).

It belongs to the TRAFAC class translation factor GTPase superfamily. Classic translation factor GTPase family. BipA subfamily. As to quaternary structure, monomer.

Its subcellular location is the cytoplasm. The catalysed reaction is GTP + H2O = GDP + phosphate + H(+). Functionally, a 50S ribosomal subunit assembly protein with GTPase activity, required for 50S subunit assembly at low temperatures, may also play a role in translation. Binds GTP and analogs. Binds the 70S ribosome between the 30S and 50S subunits, in a similar position as ribosome-bound EF-G; it contacts a number of ribosomal proteins, both rRNAs and the A-site tRNA. In Buchnera aphidicola subsp. Schizaphis graminum (strain Sg), this protein is Large ribosomal subunit assembly factor BipA.